A 160-amino-acid polypeptide reads, in one-letter code: Twist-related protein 2 (160 aa).

The disordered stretch occupies residues 1–63; that stretch reads MEEGSSSPVS…GSPSAQSFEE (63 aa). Residues 27–37 are compositionally biased toward basic residues; that stretch reads KRFGRKRRYSK. Residues 66-117 enclose the bHLH domain; sequence SQRILANVRERQRTQSLNEAFAALRKIIPTLPSDKLSKIQTLKLAARYIDFL.

As to quaternary structure, efficient DNA binding requires dimerization with another bHLH protein. Forms a heterodimer with TCF3/E12. Also interacts with MEF2C. In the embryo, highly expressed in chondrogenic cells. In embryonic skin, expressed in the undifferentiated mesenchymal layer beneath the epidermis which later develops into the dermis. Expressed in early myeloid cells but not in lymphoid cells in the liver. Expression also detected in the secretory ependymal epithelium of the choroid plexus primordium. In the adult, expressed in secreting glandular tissues and tubules.

Its subcellular location is the nucleus. The protein resides in the cytoplasm. Its function is as follows. Binds to the E-box consensus sequence 5'-CANNTG-3' as a heterodimer and inhibits transcriptional activation by MYOD1, MYOG, MEF2A and MEF2C. Also represses expression of pro-inflammatory cytokines such as TNFA and IL1B. Involved in postnatal glycogen storage and energy metabolism. Inhibits the premature or ectopic differentiation of preosteoblast cells during osteogenesis, possibly by changing the internal signal transduction response of osteoblasts to external growth factors. The sequence is that of Twist-related protein 2 (TWIST2) from Homo sapiens (Human).